The chain runs to 499 residues: Probable cytosol aminopeptidase (499 aa).

Positions 263 and 268 each coordinate Mn(2+). Residue Lys-275 is part of the active site. Mn(2+)-binding residues include Asp-286, Asp-345, and Glu-347. Arg-349 is a catalytic residue.

This sequence belongs to the peptidase M17 family. Mn(2+) serves as cofactor.

It localises to the cytoplasm. The enzyme catalyses Release of an N-terminal amino acid, Xaa-|-Yaa-, in which Xaa is preferably Leu, but may be other amino acids including Pro although not Arg or Lys, and Yaa may be Pro. Amino acid amides and methyl esters are also readily hydrolyzed, but rates on arylamides are exceedingly low.. It catalyses the reaction Release of an N-terminal amino acid, preferentially leucine, but not glutamic or aspartic acids.. Presumably involved in the processing and regular turnover of intracellular proteins. Catalyzes the removal of unsubstituted N-terminal amino acids from various peptides. This is Probable cytosol aminopeptidase from Chlamydia trachomatis serovar A (strain ATCC VR-571B / DSM 19440 / HAR-13).